Reading from the N-terminus, the 748-residue chain is 5-methyltetrahydropteroyltriglutamate--homocysteine methyltransferase (748 aa).

5-methyltetrahydropteroyltri-L-glutamate contacts are provided by residues Arg-18–Lys-21 and Lys-112. Residues Ile-420 to Ser-422 and Glu-473 contribute to the L-homocysteine site. L-methionine contacts are provided by residues Ile-420–Ser-422 and Glu-473. Trp-550 contributes to the 5-methyltetrahydropteroyltri-L-glutamate binding site. Asp-588 is an L-homocysteine binding site. Residue Asp-588 coordinates L-methionine. 5-methyltetrahydropteroyltri-L-glutamate is bound at residue Glu-594. Zn(2+)-binding residues include His-630, Cys-632, and Glu-654. The active-site Proton donor is His-683. Residue Cys-715 participates in Zn(2+) binding.

Belongs to the vitamin-B12 independent methionine synthase family. Requires Zn(2+) as cofactor.

It catalyses the reaction 5-methyltetrahydropteroyltri-L-glutamate + L-homocysteine = tetrahydropteroyltri-L-glutamate + L-methionine. It participates in amino-acid biosynthesis; L-methionine biosynthesis via de novo pathway; L-methionine from L-homocysteine (MetE route): step 1/1. In terms of biological role, catalyzes the transfer of a methyl group from 5-methyltetrahydrofolate to homocysteine resulting in methionine formation. The sequence is that of 5-methyltetrahydropteroyltriglutamate--homocysteine methyltransferase from Staphylococcus epidermidis (strain ATCC 12228 / FDA PCI 1200).